Consider the following 122-residue polypeptide: Small ribosomal subunit protein bS16 (122 aa).

This sequence belongs to the bacterial ribosomal protein bS16 family.

The polypeptide is Small ribosomal subunit protein bS16 (Prochlorococcus marinus (strain MIT 9313)).